We begin with the raw amino-acid sequence, 334 residues long: Protein-methionine-sulfoxide reductase catalytic subunit MsrP (334 aa).

The segment at residues 1–44 is a signal peptide (tat-type signal); it reads MKKNQFLKESDVTAESVFFMKRRQVLKALGISAAALSLPHAAHA. Mo-molybdopterin-binding positions include Asn88, 91-92, Cys146, Thr181, Asn233, Arg238, and 249-251; these read YE and GIK.

This sequence belongs to the MsrP family. Heterodimer of a catalytic subunit (MsrP) and a heme-binding subunit (MsrQ). It depends on Mo-molybdopterin as a cofactor. Post-translationally, predicted to be exported by the Tat system. The position of the signal peptide cleavage has not been experimentally proven.

It localises to the periplasm. The enzyme catalyses L-methionyl-[protein] + a quinone + H2O = L-methionyl-(S)-S-oxide-[protein] + a quinol. The catalysed reaction is L-methionyl-[protein] + a quinone + H2O = L-methionyl-(R)-S-oxide-[protein] + a quinol. In terms of biological role, part of the MsrPQ system that repairs oxidized periplasmic proteins containing methionine sulfoxide residues (Met-O), using respiratory chain electrons. Thus protects these proteins from oxidative-stress damage caused by reactive species of oxygen and chlorine generated by the host defense mechanisms. MsrPQ is essential for the maintenance of envelope integrity under bleach stress, rescuing a wide series of structurally unrelated periplasmic proteins from methionine oxidation, including the primary periplasmic chaperone SurA and the lipoprotein Pal. The catalytic subunit MsrP is non-stereospecific, being able to reduce both (R-) and (S-) diastereoisomers of methionine sulfoxide. This chain is Protein-methionine-sulfoxide reductase catalytic subunit MsrP, found in Escherichia coli O17:K52:H18 (strain UMN026 / ExPEC).